The chain runs to 93 residues: U12-lycotoxin-Ls1b (93 aa).

A signal peptide spans 1–18; that stretch reads MKFAVILLFSLVVLAVAS. Residues 19–38 constitute a propeptide that is removed on maturation; that stretch reads ESVEEVRREIDIEDLPEQQR.

The protein belongs to the neurotoxin 31 family. Contains 5 disulfide bonds. Expressed by the venom gland.

The protein localises to the secreted. This chain is U12-lycotoxin-Ls1b, found in Lycosa singoriensis (Wolf spider).